The following is a 249-amino-acid chain: tRNA pseudouridine synthase A (249 aa).

Catalysis depends on Asp-53, which acts as the Nucleophile. Position 111 (Tyr-111) interacts with substrate.

The protein belongs to the tRNA pseudouridine synthase TruA family. Homodimer.

The enzyme catalyses uridine(38/39/40) in tRNA = pseudouridine(38/39/40) in tRNA. Functionally, formation of pseudouridine at positions 38, 39 and 40 in the anticodon stem and loop of transfer RNAs. The protein is tRNA pseudouridine synthase A of Streptococcus pneumoniae (strain 70585).